A 1322-amino-acid polypeptide reads, in one-letter code: Ice nucleation protein InaA (1322 aa).

Residues 162 to 1281 (ATYGSTLSGT…LTAGENSVLI (1120 aa)) form an octapeptide periodicity region. Polar residues-rich tracts occupy residues 271-302 (SLTAGYGSTQTAGEDSSLTAGYGSTQTAQKGS), 327-350 (TQTAGEESTQTAGYGSTQTAQKGS), 373-398 (GSTQTAGEDSSLTAGYGSTQTAQKGS), and 423-446 (TQTAGEESTQTAGYGSTQTAQKGS). Disordered stretches follow at residues 271-303 (SLTAGYGSTQTAGEDSSLTAGYGSTQTAQKGSD), 327-358 (TQTAGEESTQTAGYGSTQTAQKGSDLTAGYGS), 372-399 (YGSTQTAGEDSSLTAGYGSTQTAQKGSD), and 423-448 (TQTAGEESTQTAGYGSTQTAQKGSDL).

It belongs to the bacterial ice nucleation protein family.

It is found in the cell outer membrane. Ice nucleation proteins enable bacteria to nucleate crystallization in supercooled water. The protein is Ice nucleation protein InaA (inaA) of Pantoea ananas (Erwinia uredovora).